The primary structure comprises 84 residues: UPF0386 protein R01313 (84 aa).

This sequence belongs to the UPF0386 family.

The sequence is that of UPF0386 protein R01313 from Rhizobium meliloti (strain 1021) (Ensifer meliloti).